The primary structure comprises 536 residues: UDP-N-acetylmuramate--L-alanine ligase (536 aa).

133-139 (GSSGKTT) provides a ligand contact to ATP.

Belongs to the MurCDEF family.

Its subcellular location is the cytoplasm. It carries out the reaction UDP-N-acetyl-alpha-D-muramate + L-alanine + ATP = UDP-N-acetyl-alpha-D-muramoyl-L-alanine + ADP + phosphate + H(+). The protein operates within cell wall biogenesis; peptidoglycan biosynthesis. Functionally, cell wall formation. In Wolbachia sp. subsp. Brugia malayi (strain TRS), this protein is UDP-N-acetylmuramate--L-alanine ligase.